A 323-amino-acid chain; its full sequence is COP9 signalosome complex subunit 6 (323 aa).

In terms of domain architecture, MPN spans 37-170; that stretch reads VALHPLVILN…VSVFESVIDI (134 aa).

The protein belongs to the peptidase M67A family. CSN6 subfamily. In terms of assembly, component of the CSN complex, composed of COPS1/GPS1, COPS2, COPS3, COPS4, COPS5, COPS6, COPS7 (COPS7A or COPS7B), COPS8 and COPS9. In the complex, it probably interacts directly with COPS2, COPS4, COPS5, COPS7 (COPS7A or COPS7B) and COPS9. Interacts with the translation initiation factor EIF3S6. Interacts weakly with RBX1. Directly interacts with COP1 and 14-3-3 protein sigma/SFN. Interacts with ERCC6.

The protein resides in the cytoplasm. It is found in the nucleus. In terms of biological role, component of the COP9 signalosome complex (CSN), a complex involved in various cellular and developmental processes. The CSN complex is an essential regulator of the ubiquitin (Ubl) conjugation pathway by mediating the deneddylation of the cullin subunits of SCF-type E3 ligase complexes, leading to decrease the Ubl ligase activity of SCF-type complexes such as SCF, CSA or DDB2. The complex is also involved in phosphorylation of p53/TP53, c-jun/JUN, IkappaBalpha/NFKBIA, ITPK1 and IRF8, possibly via its association with CK2 and PKD kinases. CSN-dependent phosphorylation of TP53 and JUN promotes and protects degradation by the Ubl system, respectively. Has some glucocorticoid receptor-responsive activity. Stabilizes COP1 through reducing COP1 auto-ubiquitination and decelerating COP1 turnover rate, hence regulates the ubiquitination of COP1 targets, including SFN. The polypeptide is COP9 signalosome complex subunit 6 (COPS6) (Sus scrofa (Pig)).